A 360-amino-acid polypeptide reads, in one-letter code: Peptide chain release factor 1 (360 aa).

Gln-235 carries the N5-methylglutamine modification.

This sequence belongs to the prokaryotic/mitochondrial release factor family. Post-translationally, methylated by PrmC. Methylation increases the termination efficiency of RF1.

Its subcellular location is the cytoplasm. Peptide chain release factor 1 directs the termination of translation in response to the peptide chain termination codons UAG and UAA. The polypeptide is Peptide chain release factor 1 (Burkholderia vietnamiensis (strain G4 / LMG 22486) (Burkholderia cepacia (strain R1808))).